Consider the following 506-residue polypeptide: MDTILRLSHITKSFPGVKALSDIDLEIARGEIHALLGENGAGKSTLMKILCGIHQPDAGTIEIDGAARHFADYHDAVAAGVGIVFQEFSLIPHLDAVDNLFLGRELRNRWGARDRKRMRAAAAAIFARLGVAIDLDAPIRTLSVAQQQFVEIGKALSLDARILILDEPTATLTPAEAEHLFAIMRELKRQGVAMIFISHHLDEIFVVCDRITVLRDGQYVATTEVARTDVEQLVRMMVGRRIESSFPPKPVLPADAPAVLEVDALQIERDGPVNRFALREGEILGFAGLVGSGRTETALAVIGATRAHRKELRVRGAAAKLADPADALRAGIGILPESRKTEGLVTSFSIRDNISLNNLGKYRSMRWLIDRRGEARTTHDVMRRVGVKAPSIHTEVATLSGGNQQKVVIARWLNHHTSVLIFDEPTRGIDVGAKAEIYGLMRELTARGYAIIMISSELPEIVGMCDRVAVFRQGRIEATLEGDEIDPDTVMTYATAGTRGATHEPA.

ABC transporter domains lie at 5–241 and 254–498; these read LRLS…VGRR and ADAP…TAGT. An ATP-binding site is contributed by 37 to 44; sequence GENGAGKS.

It belongs to the ABC transporter superfamily. Ribose importer (TC 3.A.1.2.1) family. As to quaternary structure, the complex is composed of an ATP-binding protein (RbsA), two transmembrane proteins (RbsC) and a solute-binding protein (RbsB).

It localises to the cell inner membrane. The enzyme catalyses D-ribose(out) + ATP + H2O = D-ribose(in) + ADP + phosphate + H(+). In terms of biological role, part of the ABC transporter complex RbsABC involved in ribose import. Responsible for energy coupling to the transport system. In Burkholderia cenocepacia (strain HI2424), this protein is Ribose import ATP-binding protein RbsA 2.